A 394-amino-acid polypeptide reads, in one-letter code: Elongation factor Tu (394 aa).

A tr-type G domain is found at 10–204 (KPHVNVGTIG…HLDTYIPEPE (195 aa)). The tract at residues 19 to 26 (GHVDHGKT) is G1. 19–26 (GHVDHGKT) serves as a coordination point for GTP. T26 lines the Mg(2+) pocket. Residues 60 to 64 (GITIN) are G2. Residues 81–84 (DCPG) form a G3 region. GTP contacts are provided by residues 81 to 85 (DCPGH) and 136 to 139 (NKCD). Residues 136–139 (NKCD) are G4. Residues 174–176 (SAL) are G5.

This sequence belongs to the TRAFAC class translation factor GTPase superfamily. Classic translation factor GTPase family. EF-Tu/EF-1A subfamily. In terms of assembly, monomer.

It is found in the cytoplasm. It carries out the reaction GTP + H2O = GDP + phosphate + H(+). Its function is as follows. GTP hydrolase that promotes the GTP-dependent binding of aminoacyl-tRNA to the A-site of ribosomes during protein biosynthesis. The polypeptide is Elongation factor Tu (Actinobacillus pleuropneumoniae serotype 5b (strain L20)).